The chain runs to 470 residues: ESX-4 secretion system ATPase EccB4 (470 aa).

Residues 44 to 64 traverse the membrane as a helical segment; the sequence is LALGCVLAIVAAMGCAFVALL.

This sequence belongs to the EccB family. As to quaternary structure, part of the ESX-4 / type VII secretion system (T7SS), which is composed of cytosolic and membrane components.

It localises to the cell membrane. In terms of biological role, an ATPase. This is ESX-4 secretion system ATPase EccB4 (eccB4) from Mycobacterium tuberculosis (strain CDC 1551 / Oshkosh).